Here is a 149-residue protein sequence, read N- to C-terminus: 3-dehydroquinate dehydratase (149 aa).

Tyr24 (proton acceptor) is an active-site residue. 3 residues coordinate substrate: Asn75, His81, and Asp88. His101 functions as the Proton donor in the catalytic mechanism. Residues 102-103 and Arg112 each bind substrate; that span reads LS.

Belongs to the type-II 3-dehydroquinase family. In terms of assembly, homododecamer.

It catalyses the reaction 3-dehydroquinate = 3-dehydroshikimate + H2O. It participates in metabolic intermediate biosynthesis; chorismate biosynthesis; chorismate from D-erythrose 4-phosphate and phosphoenolpyruvate: step 3/7. Functionally, catalyzes a trans-dehydration via an enolate intermediate. The sequence is that of 3-dehydroquinate dehydratase from Bartonella tribocorum (strain CIP 105476 / IBS 506).